Here is a 304-residue protein sequence, read N- to C-terminus: MARTDDDTWDLATSVGATATMVAAGRARATRDGLIDDPFAEPLVRAVGVDFFTRWAAGELDAADVDVPGAAWGMQRMTDMITARTRYIDAFFAEAGAAGIRQVVILASGLDARAYRLPWPAGTTVFEIDQPRVLEFKAATIAQLGAEPTAPVRAVAVDLRHDWPSALRQAGFDVGRPAAWAAEGLLGFLPPQAQDRLLDNVTALSADGSQLVAEVFANTGASGDALNAAGEKWRRHGLDVALDDLGFPGERNDPASYLQQLGWQPVRTPLNQMLANNGLPLQSTEPGAPFAQNYYCTAVLNKAG.

Residues D129 and 158–159 contribute to the S-adenosyl-L-methionine site; that span reads DL.

This sequence belongs to the UPF0677 family.

Exhibits S-adenosyl-L-methionine-dependent methyltransferase activity. This chain is Putative S-adenosyl-L-methionine-dependent methyltransferase MAV_4236, found in Mycobacterium avium (strain 104).